A 432-amino-acid polypeptide reads, in one-letter code: METAIEWITAHEILDSRGQPTLEALVGLANGATGLAQVPSGASTGTFEAHELRDGDPKRYGGKGVLRAVENILGPIQSELRGEDALNQARIDQLLIDLDGTPNKSQLGANAILAVSLATAKAAASAVGLPLYRYLGGPFANLLPAPLMNVLNGGAHADNNLDIQEFMIVPIGAPSFREALRYGAEVFAALKQVLRQRGLSTGVGDEGGFAPNLDSNAAALDLLMTAIEQAGYRPGEDIALALDVAANELLQDGQYHFEGKARSAEQMVNYYEQLLANYPILSLEDGLAEEDWAGWQAMTARLGSRVQLVGDDLFVTNPARLQKGIDSGAANAILIKLNQIGTLTETVSTIQLAVQAGFRTLISHRSGETEDTTIADLAVATRAGQIKTGSLCRSERIAKYNQLLRIEDELGEAAVYAGRVGLGPRGLPARSR.

Gln-164 provides a ligand contact to (2R)-2-phosphoglycerate. The Proton donor role is filled by Glu-206. Mg(2+) contacts are provided by Asp-243, Glu-284, and Asp-311. (2R)-2-phosphoglycerate is bound by residues Lys-336, Arg-365, Ser-366, and Lys-387. Lys-336 serves as the catalytic Proton acceptor.

The protein belongs to the enolase family. It depends on Mg(2+) as a cofactor.

It is found in the cytoplasm. The protein resides in the secreted. The protein localises to the cell surface. The catalysed reaction is (2R)-2-phosphoglycerate = phosphoenolpyruvate + H2O. Its pathway is carbohydrate degradation; glycolysis; pyruvate from D-glyceraldehyde 3-phosphate: step 4/5. Functionally, catalyzes the reversible conversion of 2-phosphoglycerate (2-PG) into phosphoenolpyruvate (PEP). It is essential for the degradation of carbohydrates via glycolysis. The sequence is that of Enolase from Synechococcus sp. (strain JA-3-3Ab) (Cyanobacteria bacterium Yellowstone A-Prime).